The chain runs to 411 residues: uncharacterized protein (411 aa).

The N-terminal stretch at 1–21 (MHSRILLLLLMFAFNVGLINC) is a signal peptide. The EGF-like domain maps to 28–67 (PQSNCKIRCENGGMCVFDLERPDFHSCICLLGVYTGDRCQ). 3 cysteine pairs are disulfide-bonded: C32–C42, C36–C54, and C56–C66. Polar residues predominate over residues 78–97 (TATSDETSHPMNIQHQQSQA). Disordered regions lie at residues 78-312 (TATS…EPIR) and 337-375 (HPIEEDEYWDETSKKTDEDSWTAENEGTKKTEEADEYGM). A compositionally biased stretch (basic and acidic residues) spans 100 to 230 (DDARRRDDER…VEKELNDKRT (131 aa)). Positions 237-266 (FEYEGGDEEYPQVAEKEDEYDEGYETDNTE) are enriched in acidic residues. Residues 267 to 276 (DVTITTTKTT) are compositionally biased toward low complexity.

This is an uncharacterized protein from Caenorhabditis elegans.